The primary structure comprises 1058 residues: Carbamoyl phosphate synthase large chain (1058 aa).

A carboxyphosphate synthetic domain region spans residues M1–E401. The ATP site is built by R129, R169, G175, G176, R208, I210, E215, G241, I242, H243, Q284, and E298. The 195-residue stretch at K133–V327 folds into the ATP-grasp 1 domain. 3 residues coordinate Mg(2+): Q284, E298, and N300. 3 residues coordinate Mn(2+): Q284, E298, and N300. The segment at I402–S546 is oligomerization domain. The carbamoyl phosphate synthetic domain stretch occupies residues V547–N929. In terms of domain architecture, ATP-grasp 2 spans E671–L861. ATP-binding residues include R707, S746, I748, E752, G777, V778, H779, S780, Q820, and E832. The Mg(2+) site is built by Q820, E832, and N834. Mn(2+)-binding residues include Q820, E832, and N834. Positions S930–I1058 constitute an MGS-like domain. The tract at residues S930 to I1058 is allosteric domain.

Belongs to the CarB family. As to quaternary structure, composed of two chains; the small (or glutamine) chain promotes the hydrolysis of glutamine to ammonia, which is used by the large (or ammonia) chain to synthesize carbamoyl phosphate. Tetramer of heterodimers (alpha,beta)4. Mg(2+) is required as a cofactor. Mn(2+) serves as cofactor.

It catalyses the reaction hydrogencarbonate + L-glutamine + 2 ATP + H2O = carbamoyl phosphate + L-glutamate + 2 ADP + phosphate + 2 H(+). The enzyme catalyses hydrogencarbonate + NH4(+) + 2 ATP = carbamoyl phosphate + 2 ADP + phosphate + 2 H(+). The protein operates within amino-acid biosynthesis; L-arginine biosynthesis; carbamoyl phosphate from bicarbonate: step 1/1. It functions in the pathway pyrimidine metabolism; UMP biosynthesis via de novo pathway; (S)-dihydroorotate from bicarbonate: step 1/3. Its function is as follows. Large subunit of the glutamine-dependent carbamoyl phosphate synthetase (CPSase). CPSase catalyzes the formation of carbamoyl phosphate from the ammonia moiety of glutamine, carbonate, and phosphate donated by ATP, constituting the first step of 2 biosynthetic pathways, one leading to arginine and/or urea and the other to pyrimidine nucleotides. The large subunit (synthetase) binds the substrates ammonia (free or transferred from glutamine from the small subunit), hydrogencarbonate and ATP and carries out an ATP-coupled ligase reaction, activating hydrogencarbonate by forming carboxy phosphate which reacts with ammonia to form carbamoyl phosphate. This chain is Carbamoyl phosphate synthase large chain, found in Streptococcus pyogenes serotype M3 (strain SSI-1).